A 92-amino-acid chain; its full sequence is RNA-binding protein Hfq (92 aa).

Residues 9-68 (DPFLNALRRERVPVSIYLVNGIKLQGQVESFDQFVILLKNTVSQMVYKHAISTVVPARPF) enclose the Sm domain. The disordered stretch occupies residues 68–92 (FNVSSHHNTPNQAAGYNASHDDSAE). Residues 69-81 (NVSSHHNTPNQAA) show a composition bias toward polar residues.

The protein belongs to the Hfq family. In terms of assembly, homohexamer.

Its function is as follows. RNA chaperone that binds small regulatory RNA (sRNAs) and mRNAs to facilitate mRNA translational regulation in response to envelope stress, environmental stress and changes in metabolite concentrations. Also binds with high specificity to tRNAs. The chain is RNA-binding protein Hfq from Shewanella loihica (strain ATCC BAA-1088 / PV-4).